A 276-amino-acid chain; its full sequence is Orotidine 5'-phosphate decarboxylase (276 aa).

Residues D40, 62–64 (KTH), 93–102 (DRKFIDIGNT), Y228, and R246 each bind substrate. K95 functions as the Proton donor in the catalytic mechanism.

Belongs to the OMP decarboxylase family.

The catalysed reaction is orotidine 5'-phosphate + H(+) = UMP + CO2. It participates in pyrimidine metabolism; UMP biosynthesis via de novo pathway; UMP from orotate: step 2/2. The protein is Orotidine 5'-phosphate decarboxylase (pyrG) of Penicillium nalgiovense.